The chain runs to 245 residues: MKMKQISDTTLKITISLEDLMDRGMEIADFLVPQEKTEEFFYAILDELEMPDSFLDTGMLSFRVTPKPDKVDVFVTKSKIDQNLDFEDLSDLPDMEELAQMSPDEFIKTLEKSIADKTKDDIEAIQSLEQVEVKEEEQEQAEQEAESKKEPYIYYILSFAKLADLVAFAKTVTFEMETSELYKMNERYYLTILVDIENHPSPYPAWLLARMREFADDSDISRSVLQEYGQVLMSHDAVLNLQKIG.

Belongs to the MecA family. Homodimer.

Its function is as follows. Enables the recognition and targeting of unfolded and aggregated proteins to the ClpC protease or to other proteins involved in proteolysis. The polypeptide is Adapter protein MecA (Streptococcus pneumoniae serotype 4 (strain ATCC BAA-334 / TIGR4)).